The following is a 125-amino-acid chain: SOSS complex subunit C homolog (125 aa).

The disordered stretch occupies residues 43 to 77 (MPSPQLLGQPTVAPEFLPQGVGLPTNATPPRSAFN). Residues 67 to 77 (TNATPPRSAFN) show a composition bias toward polar residues.

Belongs to the SOSS-C family.

The sequence is that of SOSS complex subunit C homolog from Drosophila persimilis (Fruit fly).